We begin with the raw amino-acid sequence, 235 residues long: Histidine/lysine/arginine/ornithine transport system permease protein HisM (235 aa).

The Periplasmic segment spans residues methionine 1–threonine 26. One can recognise an ABC transmembrane type-1 domain in the interval valine 23–phenylalanine 221. The chain crosses the membrane as a helical span at residues leucine 27–glycine 47. At arginine 48–proline 58 the chain is on the cytoplasmic side. Residues isoleucine 59 to tyrosine 79 form a helical membrane-spanning segment. The Periplasmic portion of the chain corresponds to serine 80–cysteine 104. Residues threonine 105–isoleucine 125 form a helical membrane-spanning segment. At arginine 126 to arginine 157 the chain is on the cytoplasmic side. A helical membrane pass occupies residues isoleucine 158 to phenylalanine 178. The Periplasmic segment spans residues threonine 179–proline 199. A helical membrane pass occupies residues phenylalanine 200–leucine 220. Residues phenylalanine 221–lysine 235 lie on the Cytoplasmic side of the membrane.

This sequence belongs to the binding-protein-dependent transport system permease family. HisMQ subfamily. As to quaternary structure, the HisPMQJ complex is composed of two ATP-binding proteins (HisP), two transmembrane proteins (HisM and HisQ) and a solute-binding protein (HisJ). The HisPMQ-ArgT complex is composed of two ATP-binding proteins (HisP), two transmembrane proteins (HisM and HisQ) and a solute-binding protein (ArgT).

It is found in the cell inner membrane. Functionally, part of the ABC transporter complex HisPMQJ involved in histidine transport. Is also part of the ABC transporter complex HisPMQ-ArgT involved in lysine/arginine/ornithine transport. Probably responsible for the translocation of the substrate across the membrane. This Salmonella typhi protein is Histidine/lysine/arginine/ornithine transport system permease protein HisM (hisM).